The sequence spans 148 residues: Large ribosomal subunit protein uL15 (148 aa).

Residues 1 to 61 (MELNNLKPAI…GGQMPMQRRL (61 aa)) are disordered. Positions 30 to 39 (TATKGHKGQK) are enriched in basic residues.

It belongs to the universal ribosomal protein uL15 family. In terms of assembly, part of the 50S ribosomal subunit.

Its function is as follows. Binds to the 23S rRNA. This Geobacter metallireducens (strain ATCC 53774 / DSM 7210 / GS-15) protein is Large ribosomal subunit protein uL15.